We begin with the raw amino-acid sequence, 141 residues long: Hemoglobin subunit alpha (141 aa).

Residues 1-141 form the Globin domain; sequence VLSSTDKSNV…VSTVLTSKYR (141 aa). S3 is modified (phosphoserine). N6-succinyllysine is present on residues K7 and K11. K16 bears the N6-acetyllysine; alternate mark. An N6-succinyllysine; alternate modification is found at K16. The residue at position 24 (Y24) is a Phosphotyrosine. Residue S35 is modified to Phosphoserine. K40 carries the post-translational modification N6-succinyllysine. Residue H58 coordinates O2. H87 is a heme b binding site. S102 is subject to Phosphoserine. Phosphothreonine is present on T108. Phosphoserine is present on residues S124 and S131. Residues T134 and T137 each carry the phosphothreonine modification. Phosphoserine is present on S138.

This sequence belongs to the globin family. As to quaternary structure, heterotetramer of two alpha chains and two beta chains. As to expression, red blood cells.

Functionally, involved in oxygen transport from the lung to the various peripheral tissues. Its function is as follows. Hemopressin acts as an antagonist peptide of the cannabinoid receptor CNR1. Hemopressin-binding efficiently blocks cannabinoid receptor CNR1 and subsequent signaling. The chain is Hemoglobin subunit alpha (HBA) from Pteropus poliocephalus (Grey-headed flying fox).